Reading from the N-terminus, the 246-residue chain is Ribonuclease PH (246 aa).

Residues Arg-91 and 129–131 (GTR) each bind phosphate.

The protein belongs to the RNase PH family. In terms of assembly, homohexameric ring arranged as a trimer of dimers.

The enzyme catalyses tRNA(n+1) + phosphate = tRNA(n) + a ribonucleoside 5'-diphosphate. Phosphorolytic 3'-5' exoribonuclease that plays an important role in tRNA 3'-end maturation. Removes nucleotide residues following the 3'-CCA terminus of tRNAs; can also add nucleotides to the ends of RNA molecules by using nucleoside diphosphates as substrates, but this may not be physiologically important. Probably plays a role in initiation of 16S rRNA degradation (leading to ribosome degradation) during starvation. The chain is Ribonuclease PH from Burkholderia vietnamiensis (strain G4 / LMG 22486) (Burkholderia cepacia (strain R1808)).